A 161-amino-acid polypeptide reads, in one-letter code: Nucleotide-binding protein Spea_3114 (161 aa).

The protein belongs to the YajQ family.

In terms of biological role, nucleotide-binding protein. This is Nucleotide-binding protein Spea_3114 from Shewanella pealeana (strain ATCC 700345 / ANG-SQ1).